A 111-amino-acid polypeptide reads, in one-letter code: uncharacterized protein (111 aa).

Residues 4-51 are a coiled coil; that stretch reads LGQVKVLEEKVAKAVHLVQMLKEENAALRAEIDGRGKRITELEQLVLX.

This is an uncharacterized protein from Treponema pallidum (strain Nichols).